The primary structure comprises 468 residues: 3-isopropylmalate dehydratase large subunit (468 aa).

3 residues coordinate [4Fe-4S] cluster: Cys-348, Cys-409, and Cys-412.

This sequence belongs to the aconitase/IPM isomerase family. LeuC type 1 subfamily. As to quaternary structure, heterodimer of LeuC and LeuD. It depends on [4Fe-4S] cluster as a cofactor.

The catalysed reaction is (2R,3S)-3-isopropylmalate = (2S)-2-isopropylmalate. It functions in the pathway amino-acid biosynthesis; L-leucine biosynthesis; L-leucine from 3-methyl-2-oxobutanoate: step 2/4. In terms of biological role, catalyzes the isomerization between 2-isopropylmalate and 3-isopropylmalate, via the formation of 2-isopropylmaleate. This chain is 3-isopropylmalate dehydratase large subunit, found in Dechloromonas aromatica (strain RCB).